We begin with the raw amino-acid sequence, 86 residues long: Omega-theraphotoxin-Hhn1c (86 aa).

The signal sequence occupies residues 1–21 (MKSIVFVALFGLALLAVVCSA). Positions 22-50 (SEDAHKELLKEVVRAMVVDKTDAVQAEER) are excised as a propeptide. Disulfide bonds link Cys-52-Cys-66, Cys-59-Cys-71, and Cys-65-Cys-78.

This sequence belongs to the neurotoxin 10 (Hwtx-1) family. 17 (Hntx-9) subfamily. As to expression, expressed by the venom gland.

It is found in the secreted. In terms of biological role, ion channel inhibitor. The polypeptide is Omega-theraphotoxin-Hhn1c (Cyriopagopus hainanus (Chinese bird spider)).